The sequence spans 218 residues: 4-coumaroyl-homoserine lactone synthase (218 aa).

This sequence belongs to the autoinducer synthase family.

It catalyses the reaction 4-coumaroyl-CoA + S-adenosyl-L-methionine = N-(4-coumaroyl)-L-homoserine lactone + S-methyl-5'-thioadenosine + CoA + H(+). Functionally, catalyzes the synthesis of 4-coumaroyl-homoserine lactone, a quorum-sensing (QS) autoinducer molecule which binds to RpaR transcriptional regulator to regulate expression of QS-dependent genes. The sequence is that of 4-coumaroyl-homoserine lactone synthase from Rhodopseudomonas palustris (strain ATCC BAA-98 / CGA009).